The following is a 599-amino-acid chain: MGESLNGLKRTMMCGEPREEHVGKKITLMGWVQRNRKLGALEFVDLRDKTGIMQVVFGEEINAEAFEKAKGVRSEYCVAVTGEVVKRESVNENMPTGFVELKCENIKILSESETPPIYIKEDLDAAENIRLKYRYLDLRRSDMHKIFEIRSKTTKAIRDYLEENNFLDVETPILSKSSPEGARDYLVPSRNYPGMFYALPQSPQIFKQLLMVSGFDRYYQIAKCFRDEDLRANRQPEFTQVDMELSFVEQEDIMAVNEGLIAHVFKKVAGVDVQLPIKRMTFKDAMEKYGSDKPDLRFGMEITNITEDVKDLDFVVFKSAIEAGGSVRALCLKCGADLGRKPLDKLGEFVKTYKAKGLAWIQIKEDGVKSSIAKFLTDDVTNSIVKTMNAETGDAILIVADKNSVVFQSLGALRLELAKQFDLIKDKNEFNFTWITEFPLFEYSEEEERYKACHHPFTAPMDEDLDFIESDPGNVRSKAYDLVLNGEELGGGSIRIHDTALQERMFRALGLTDEVVNERFGYLLQAFKFGPPPHGGLAFGLDRMIMFLAGTENIKDVIAFPKNQNAYCYLSEAPNIVDEKQLTELGIAILPKEEKNDKE.

Glu180 contributes to the L-aspartate binding site. The interval 204-207 (QIFK) is aspartate. Residue Arg226 coordinates L-aspartate. ATP is bound by residues 226-228 (RDE) and Gln235. His454 contributes to the L-aspartate binding site. ATP is bound at residue Glu488. Position 495 (Arg495) interacts with L-aspartate. 540–543 (GLDR) lines the ATP pocket.

Belongs to the class-II aminoacyl-tRNA synthetase family. Type 1 subfamily. As to quaternary structure, homodimer.

Its subcellular location is the cytoplasm. It catalyses the reaction tRNA(Asp) + L-aspartate + ATP = L-aspartyl-tRNA(Asp) + AMP + diphosphate. Catalyzes the attachment of L-aspartate to tRNA(Asp) in a two-step reaction: L-aspartate is first activated by ATP to form Asp-AMP and then transferred to the acceptor end of tRNA(Asp). This is Aspartate--tRNA ligase from Clostridium beijerinckii (strain ATCC 51743 / NCIMB 8052) (Clostridium acetobutylicum).